A 2725-amino-acid chain; its full sequence is Teneurin-1 (2725 aa).

The disordered stretch occupies residues 1–48 (MEQTDCKPYQPLPKVKHEMDLAYTSSSDESEDGRKPRQSYNSRETLHE). In terms of domain architecture, Teneurin N-terminal spans 1 to 318 (MEQTDCKPYQ…KPYRCCNWKC (318 aa)). The Cytoplasmic segment spans residues 1-324 (MEQTDCKPYQ…NWKCTALSAT (324 aa)). A Nuclear localization signal (NLS) motif is present at residues 62 to 65 (RKRK). Ser-105 carries the phosphoserine modification. Thr-109 carries the post-translational modification Phosphothreonine. A Phosphoserine modification is found at Ser-116. Positions 174–189 (AGSTQDVQSSPHNQFT) are enriched in polar residues. Residues 174-241 (AGSTQDVQSS…PAPPTSTQDS (68 aa)) form a disordered region. Positions 192-201 (PLPPPPPPPH) are enriched in pro residues. The Required for interaction with SORBS1 (Ten-1 ICD form) motif lies at 290–297 (PPPRPLPR). The helical transmembrane segment at 325–345 (AITVTLALLLAYVIAVHLFGL) threads the bilayer. Residues 346 to 2725 (TWQLQPVEGE…FMRQSEIGRR (2380 aa)) lie on the Extracellular side of the membrane. Asn-433 carries N-linked (GlcNAc...) asparagine glycosylation. EGF-like domains lie at 528–559 (IMDD…PDCA), 560–591 (RDSC…ECDV), 592–624 (PEEQ…EICE), 625–657 (EEDC…NCET), 658–691 (PLPV…SDCS), 692–721 (TELC…GPTC), 722–753 (EERS…DHCT), and 761–796 (VRDG…TGCN). 22 disulfides stabilise this stretch: Cys-532–Cys-542, Cys-536–Cys-547, Cys-549–Cys-558, Cys-567–Cys-578, Cys-580–Cys-589, Cys-596–Cys-607, Cys-601–Cys-612, Cys-614–Cys-623, Cys-628–Cys-639, Cys-633–Cys-644, Cys-646–Cys-655, Cys-666–Cys-679, Cys-681–Cys-690, Cys-695–Cys-705, Cys-699–Cys-710, Cys-712–Cys-721, Cys-726–Cys-736, Cys-730–Cys-741, Cys-743–Cys-752, Cys-765–Cys-775, Cys-769–Cys-784, and Cys-786–Cys-795. N-linked (GlcNAc...) asparagine glycosylation is found at Asn-905 and Asn-1084. NHL repeat units lie at residues 1194–1219 (LFAP…VRRI), 1292–1336 (SHCG…NAVI), 1351–1402 (LSCD…IAGR), 1414–1458 (FLVS…VTTN), and 1481–1524 (CFSG…ISRN). Residues 1534-1553 (YEIASPADQELYQFTVNGTH) form a YD 1 repeat. N-linked (GlcNAc...) asparagine glycans are attached at residues Asn-1550 and Asn-1567. YD repeat units lie at residues 1570-1590 (YNSE…VHIR), 1608-1632 (YWLT…ALMT), 1633-1654 (YPGN…TVYE), and 1655-1675 (YDPE…SSFH). N-linked (GlcNAc...) asparagine glycans are attached at residues Asn-1663, Asn-1699, Asn-1757, Asn-1781, and Asn-1842. YD repeat units lie at residues 1845–1864 (YSPS…EKME), 1865–1885 (YDQS…WSYT), 1886–1904 (YLEK…YIFE), 1905–1925 (YDQP…HSLQ), 1933–1949 (YRNI…FIQD), 1950–1969 (YSRD…RRVL), 1970–1989 (YKYT…TQVT), 1992–2012 (YEES…FICT), 2015–2035 (YRQT…EGLV), 2085–2105 (YDLN…FSAN), and 2113–2133 (YEIL…VGRM). Asn-2145 carries an N-linked (GlcNAc...) asparagine glycan. YD repeat units lie at residues 2153-2173 (YDAD…WRYS), 2174-2194 (YDLN…LTPL), 2196-2216 (YDLR…DEDG), 2228-2248 (YNSN…TVQY), and 2250-2270 (YDGL…LQFF). Asn-2285 carries N-linked (GlcNAc...) asparagine glycosylation. 2 YD repeats span residues 2296–2313 (YDLQ…GEEY) and 2314–2337 (YVAC…IKEI). Ser-2580 is subject to Phosphoserine. Asn-2602 is a glycosylation site (N-linked (GlcNAc...) asparagine).

This sequence belongs to the tenascin family. Teneurin subfamily. In terms of assembly, homodimer; disulfide-linked. Heterodimer with either TENM2 or TENM3. May also form heterodimer with TENM4. Ten-1 ICD interacts with SORBS1 (via third SH3 domain). Interacts with MBD1. Ten-1 ICD interacts with HINT1. Derives from the plasma membrane form by proteolytic processing. Further proteolytic cleavage may be generated. Expressed in fetal brain.

The protein localises to the cell membrane. It localises to the nucleus. The protein resides in the nucleus speckle. Its subcellular location is the nucleus matrix. It is found in the cytoplasm. The protein localises to the cytoskeleton. Functionally, involved in neural development, regulating the establishment of proper connectivity within the nervous system. May function as a cellular signal transducer. In terms of biological role, plays a role in the regulation of neuroplasticity in the limbic system. Mediates a rapid reorganization of actin- and tubulin-based cytoskeleton elements with an increase in dendritic arborization and spine density formation of neurons in the hippocampus and amygdala. Induces BDNF transcription inhibition in neurons. Activates the mitogen-activated protein (MAP) kinase 2 (MEK2) and extracellular signal-regulated kinase (ERK) cascade. Also acts as a bioactive neuroprotective peptide on limbic neurons of the brain and regulates stress-induced behavior: attenuates alkalosis-associated necrotic cell death and the effects of corticotropin-releasing factor (CRF) on c-fos/FOS induction and on the reinstatement of cocaine seeking. Its function is as follows. Induces gene transcription activation. The chain is Teneurin-1 (TENM1) from Homo sapiens (Human).